We begin with the raw amino-acid sequence, 301 residues long: Protein KTI12 homolog (301 aa).

8-15 provides a ligand contact to ATP; that stretch reads GQPCSGKS. Residues 262-275 are calmodulin-binding; the sequence is LRRTFIKLAGQYSL.

The protein belongs to the KTI12 family. In terms of assembly, interacts with the elongator complex. Binds to calmodulin in a calcium-dependent manner.

It localises to the cytoplasm. The protein localises to the nucleus. Its function is as follows. Elongator complex-associated factor that is not a structural subunit but rather transiently contacts the complex. Regulates both meristem activity and organ growth; acts as a positive regulator of adaxial leaf patterning. Required for an early step in synthesis of 5-carbamoylmethyl (ncm5) groups present on uridines (ncm5U) at the wobble position in tRNA. This Oryza sativa subsp. indica (Rice) protein is Protein KTI12 homolog.